We begin with the raw amino-acid sequence, 427 residues long: Methylenetetrahydrofolate--tRNA-(uracil-5-)-methyltransferase TrmFO (427 aa).

8–13 (GAGISG) contributes to the FAD binding site.

The protein belongs to the MnmG family. TrmFO subfamily. It depends on FAD as a cofactor.

The protein localises to the cytoplasm. It catalyses the reaction uridine(54) in tRNA + (6R)-5,10-methylene-5,6,7,8-tetrahydrofolate + NADH + H(+) = 5-methyluridine(54) in tRNA + (6S)-5,6,7,8-tetrahydrofolate + NAD(+). The catalysed reaction is uridine(54) in tRNA + (6R)-5,10-methylene-5,6,7,8-tetrahydrofolate + NADPH + H(+) = 5-methyluridine(54) in tRNA + (6S)-5,6,7,8-tetrahydrofolate + NADP(+). In terms of biological role, catalyzes the folate-dependent formation of 5-methyl-uridine at position 54 (M-5-U54) in all tRNAs. The protein is Methylenetetrahydrofolate--tRNA-(uracil-5-)-methyltransferase TrmFO of Mycoplasmopsis agalactiae (strain NCTC 10123 / CIP 59.7 / PG2) (Mycoplasma agalactiae).